Consider the following 557-residue polypeptide: MEALGNFDYESYTNFTKLPSSQWGDQFLKFSIADSDFDVLEREIEVLKPKVRENIFVSSSTDKDAMKKTILSIHFLDSLGLSYHFEKEIEESLKHAFEKIEDLIADENKLHTISTIFRVFRTYGYYMSSDVFKIFKGDDGKFKESLIEDVKGMLSFYEAVHFGTTTDHILDEALSFTLNHLESLATGRRASPPHISKLIQNALHIPQHRNIQALVAREYISFYEHEEDHDETLLKLAKLNFKFLQLHYFQELKTITMWWTKLDHTSNLPPNFRERTVETWFAALMMYFEPQFSLGRIMSAKLYLVITFLDDACDTYGSISEVESLADCLERWDPDYMENLQGHMKTAFKFVMYLFKEYEEILRSQGRSFVLEKMIEEFKIIARKNLELVKWARGGHVPSFDEYIESGGAEIGTYATIACSIMGLGEIGKKEAFEWLISRPKLVRILGAKTRLMDDIADFEEDMEKGYTANALNYYMNEHGVTKEEASRELEKMNGDMNKIVNEECLKITTMPRRILMQSVNYARSLDVLYTADDVYNHREGKLKEYMRLLLVDPILL.

Arg-273, Asp-310, Asp-314, Arg-451, and Asp-454 together coordinate (2E,6E)-farnesyl diphosphate. Mg(2+) is bound by residues Asp-310 and Asp-314. The DDXXD motif signature appears at 310–314; the sequence is DDACD. Asp-454, Asp-455, and Asp-462 together coordinate Mg(2+).

This sequence belongs to the terpene synthase family. Tpsa subfamily. Monomer. It depends on Mg(2+) as a cofactor. Requires Mn(2+) as cofactor. As to expression, expressed exclusively in flowers. Expressed in intrafloral nectaries and in the funiculus within the ovules.

The protein localises to the cytoplasm. The catalysed reaction is (2E,6E)-farnesyl diphosphate = (+)-alpha-barbatene + diphosphate. The enzyme catalyses (2E,6E)-farnesyl diphosphate = (+)-thujopsene + diphosphate. It catalyses the reaction (2E,6E)-farnesyl diphosphate = (+)-beta-chamigrene + diphosphate. It carries out the reaction (2E,6E)-farnesyl diphosphate = (+)-beta-barbatene + diphosphate. The catalysed reaction is (2E,6E)-farnesyl diphosphate = beta-sesquiphellandrene + diphosphate. The enzyme catalyses (2E,6E)-farnesyl diphosphate = (S)-beta-bisabolene + diphosphate. It catalyses the reaction (2E,6E)-farnesyl diphosphate = (-)-alpha-cuprenene + diphosphate. It carries out the reaction (2E,6E)-farnesyl diphosphate = alpha-zingiberene + diphosphate. The catalysed reaction is (2E,6E)-farnesyl diphosphate = beta-acoradiene + diphosphate. The enzyme catalyses (2E,6E)-farnesyl diphosphate = (E)-beta-farnesene + diphosphate. It functions in the pathway secondary metabolite biosynthesis; terpenoid biosynthesis. Its function is as follows. Involved in the biosynthesis of over 15 sesquiterpenes (C15). The major products are (+)-alpha-barbatene (27.3%), (+)-thujopsene (17.8%) and (+)-beta-chamigrene (9.9%). Can use farnesyl diphosphate or geranyl diphosphate as substrates, but not geranylgeranyl diphosphate. This Arabidopsis thaliana (Mouse-ear cress) protein is Alpha-barbatene synthase.